Here is a 156-residue protein sequence, read N- to C-terminus: ATP synthase subunit b (156 aa).

The chain crosses the membrane as a helical span at residues 13 to 33 (AFIIFVWFCMKFVWPPLMNAI).

The protein belongs to the ATPase B chain family. As to quaternary structure, F-type ATPases have 2 components, F(1) - the catalytic core - and F(0) - the membrane proton channel. F(1) has five subunits: alpha(3), beta(3), gamma(1), delta(1), epsilon(1). F(0) has three main subunits: a(1), b(2) and c(10-14). The alpha and beta chains form an alternating ring which encloses part of the gamma chain. F(1) is attached to F(0) by a central stalk formed by the gamma and epsilon chains, while a peripheral stalk is formed by the delta and b chains.

The protein resides in the cell inner membrane. Its function is as follows. F(1)F(0) ATP synthase produces ATP from ADP in the presence of a proton or sodium gradient. F-type ATPases consist of two structural domains, F(1) containing the extramembraneous catalytic core and F(0) containing the membrane proton channel, linked together by a central stalk and a peripheral stalk. During catalysis, ATP synthesis in the catalytic domain of F(1) is coupled via a rotary mechanism of the central stalk subunits to proton translocation. In terms of biological role, component of the F(0) channel, it forms part of the peripheral stalk, linking F(1) to F(0). The protein is ATP synthase subunit b of Shewanella woodyi (strain ATCC 51908 / MS32).